The chain runs to 392 residues: UDP-N-acetylglucosamine--N-acetylmuramyl-(pentapeptide) pyrophosphoryl-undecaprenol N-acetylglucosamine transferase (392 aa).

Residues 14-16, Asn-124, Arg-167, Ser-195, Ile-251, and Gln-296 each bind UDP-N-acetyl-alpha-D-glucosamine; that span reads TGG.

It belongs to the glycosyltransferase 28 family. MurG subfamily.

The protein localises to the cell inner membrane. It carries out the reaction di-trans,octa-cis-undecaprenyl diphospho-N-acetyl-alpha-D-muramoyl-L-alanyl-D-glutamyl-meso-2,6-diaminopimeloyl-D-alanyl-D-alanine + UDP-N-acetyl-alpha-D-glucosamine = di-trans,octa-cis-undecaprenyl diphospho-[N-acetyl-alpha-D-glucosaminyl-(1-&gt;4)]-N-acetyl-alpha-D-muramoyl-L-alanyl-D-glutamyl-meso-2,6-diaminopimeloyl-D-alanyl-D-alanine + UDP + H(+). It participates in cell wall biogenesis; peptidoglycan biosynthesis. Cell wall formation. Catalyzes the transfer of a GlcNAc subunit on undecaprenyl-pyrophosphoryl-MurNAc-pentapeptide (lipid intermediate I) to form undecaprenyl-pyrophosphoryl-MurNAc-(pentapeptide)GlcNAc (lipid intermediate II). This is UDP-N-acetylglucosamine--N-acetylmuramyl-(pentapeptide) pyrophosphoryl-undecaprenol N-acetylglucosamine transferase from Sphingopyxis alaskensis (strain DSM 13593 / LMG 18877 / RB2256) (Sphingomonas alaskensis).